The primary structure comprises 151 residues: MNIKYFLLIITILGFLARSRVLVIAGLLLLTIYEFEIDFVFEFLGNKGIEIGLIFLLMAILSSLVLSPVDGEVIKDNLLSWQGTVAIIAGVLATKFNGMGLDLLQESPQFILGIIMGSLVGIVFFGGIPVGPLMAAGIGAVLFKIIEIIKG.

A run of 5 helical transmembrane segments spans residues 7 to 29 (LLII…GLLL), 49 to 69 (IEIG…LSPV), 84 to 104 (TVAI…LDLL), 110 to 130 (FILG…GIPV), and 131 to 151 (GPLM…IIKG).

Belongs to the UPF0756 family.

It is found in the cell membrane. In Halothermothrix orenii (strain H 168 / OCM 544 / DSM 9562), this protein is UPF0756 membrane protein Hore_21770.